A 276-amino-acid chain; its full sequence is Ribosomal RNA small subunit methyltransferase A (276 aa).

Residues N27, L29, G54, E75, D101, and N123 each contribute to the S-adenosyl-L-methionine site.

Belongs to the class I-like SAM-binding methyltransferase superfamily. rRNA adenine N(6)-methyltransferase family. RsmA subfamily.

It is found in the cytoplasm. It carries out the reaction adenosine(1518)/adenosine(1519) in 16S rRNA + 4 S-adenosyl-L-methionine = N(6)-dimethyladenosine(1518)/N(6)-dimethyladenosine(1519) in 16S rRNA + 4 S-adenosyl-L-homocysteine + 4 H(+). Its function is as follows. Specifically dimethylates two adjacent adenosines (A1518 and A1519) in the loop of a conserved hairpin near the 3'-end of 16S rRNA in the 30S particle. May play a critical role in biogenesis of 30S subunits. In Bartonella quintana (strain Toulouse) (Rochalimaea quintana), this protein is Ribosomal RNA small subunit methyltransferase A.